We begin with the raw amino-acid sequence, 944 residues long: Translation factor GUF1 homolog, mitochondrial (944 aa).

The tr-type G domain maps to 201 to 379 (KNVRNFCILA…IITDIPYPPI (179 aa)). GTP contacts are provided by residues 210–217 (AHIDSGKS), 271–275 (DTPGH), and 325–328 (NKID).

It belongs to the TRAFAC class translation factor GTPase superfamily. Classic translation factor GTPase family. LepA subfamily.

It is found in the mitochondrion inner membrane. It carries out the reaction GTP + H2O = GDP + phosphate + H(+). In terms of biological role, promotes mitochondrial protein synthesis. May act as a fidelity factor of the translation reaction, by catalyzing a one-codon backward translocation of tRNAs on improperly translocated ribosomes. Binds to mitochondrial ribosomes in a GTP-dependent manner. The protein is Translation factor GUF1 homolog, mitochondrial of Plasmodium yoelii yoelii.